Consider the following 301-residue polypeptide: Homoserine O-acetyltransferase (301 aa).

Cysteine 142 acts as the Acyl-thioester intermediate in catalysis. Residues lysine 163 and serine 192 each coordinate substrate. The active-site Proton acceptor is the histidine 235. Residue glutamate 237 is part of the active site. Substrate is bound at residue arginine 249.

This sequence belongs to the MetA family.

The protein localises to the cytoplasm. The catalysed reaction is L-homoserine + acetyl-CoA = O-acetyl-L-homoserine + CoA. The protein operates within amino-acid biosynthesis; L-methionine biosynthesis via de novo pathway; O-acetyl-L-homoserine from L-homoserine: step 1/1. In terms of biological role, transfers an acetyl group from acetyl-CoA to L-homoserine, forming acetyl-L-homoserine. The protein is Homoserine O-acetyltransferase of Bacillus subtilis (strain 168).